The primary structure comprises 503 residues: L-amino-acid oxidase (503 aa).

The first 18 residues, 1-18 (MNVFFMFSLLFLAALGSC), serve as a signal peptide directing secretion. A disulfide bridge connects residues Cys-28 and Cys-191. FAD contacts are provided by residues 61–62 (MS), 81–82 (EA), Arg-89, and 105–108 (GPMR). Arg-108 contacts substrate. Asn-190 carries N-linked (GlcNAc...) asparagine glycosylation. His-241 contributes to the substrate binding site. FAD is bound at residue Val-279. Cys-349 and Cys-430 are joined by a disulfide. A substrate-binding site is contributed by Tyr-390. FAD is bound by residues Glu-475 and 482–487 (GWIDST). 482–483 (GW) is a substrate binding site.

It belongs to the flavin monoamine oxidase family. FIG1 subfamily. In terms of assembly, homodimer; non-covalently linked. FAD serves as cofactor. N-glycosylated. The enzymatic activity is not affected by deglycosylation. As to expression, expressed by the venom gland.

Its subcellular location is the secreted. It carries out the reaction an L-alpha-amino acid + O2 + H2O = a 2-oxocarboxylate + H2O2 + NH4(+). It catalyses the reaction L-leucine + O2 + H2O = 4-methyl-2-oxopentanoate + H2O2 + NH4(+). The catalysed reaction is L-phenylalanine + O2 + H2O = 3-phenylpyruvate + H2O2 + NH4(+). The enzyme catalyses L-methionine + O2 + H2O = 4-methylsulfanyl-2-oxobutanoate + H2O2 + NH4(+). It carries out the reaction L-isoleucine + O2 + H2O = (S)-3-methyl-2-oxopentanoate + H2O2 + NH4(+). In terms of biological role, catalyzes an oxidative deamination of predominantly hydrophobic and aromatic L-amino acids, thus producing hydrogen peroxide that may contribute to the diverse toxic effects of this enzyme. Is highly active on L-Met, L-Leu, L-Phe and L-Ile. Exhibits diverse biological activities, such as antibacterial on both Gram-positive and Gram-negative bacteria and antiparasitic activities, as well as induction of platelet aggregation. Effects of snake L-amino oxidases on platelets are controversial, since they either induce aggregation or inhibit agonist-induced aggregation. These different effects are probably due to different experimental conditions. This protein may also have activities in hemorrhage, hemolysis, edema, and apoptosis. In Bothrops pauloensis (Neuwied's lancehead), this protein is L-amino-acid oxidase.